The following is a 1150-amino-acid chain: MSTLLDIKSSVLRQVQVCPSFRRKTEQEPEVTNSQEPPTGAWKPGDGVEFFAHMRLILKKGDGRQGLPCPEVLLRSGSPAPAEPVDPNRGLRTLTQEEVEMLYEEALYTVLHRAGTMGPDQVDDEEVLLSYLQQVFGTSSEEHMEAIMRVKKAKAPTYALKVSVMRAKNLLAKDPNGFSDPYCMLGILPASSAPQEPSGQKEQRFGFRKGSKRSSPLPAKCIQVTEVKNSTLNPVWKEHFLFEIDDVNTDQLHLDIWDHDDDVSLAEACRKLNEVIGLKGMTRYFKQIVKSARANGTAGPTEDHTDDFLGCLNIPIREVPVAGADRWFKLEPRSSASRVQGDCHLVLKLITTQRDTVMSQRGRSGFLSYLLLLSRVLRFEHRVEEPNSSSWRGELSGPGTTVLCLHGAQSNLSPLQLAVLHWQVSSRHHQTRTLDYGYLLGLLEDVQAHWEEAASLPQEQEESLADSFSAFSEFGLRLLRQLRDYFPATNSTAVYRLELLLKCLEKLQLFQPAFEICPFETELSMDIAAALKRGNREWYDQLLNTKSPREQPGPQRLAGLVELADIIYEDLQLCYGVYASLFHGILKVDFFTLTFRQLERLVAEEAWVLTEELSPKMNLEVASGLFELYLTLADTQRFWSCIPGRESRSLALAGIHTPFLPAVKLWLQVLRDQAKWRLQGAVDVDTLEPVDAASKHSSSAATASLCLSHIQELWVRLAWPDPSQAQGLGTQLSQDMCEASLFYTELLRKKVDTQPGAAGEAVSEQLCVVLNNVELVRRASGQALRGLAWSEGASGLEGVLPRPLLSCIQALDEDLHREAHTVTAHLTSKMVADIRKYIQHISLSPDSIQNDEAVAPLLKYLDEKLALLNDALVKENLNRVLEALWELLLQAILQALSANRDVSADFYGRFHFTLEALVSFFHAEGQGLPLENLRDGSYKRLQEELRLHKCSTRECIEQFYLDKLKQRSLEQNRFGRLTVRCHYEAAEQRLAVEVLHAADLLPLDANGLSDPFVIVELGPPHLFPLVRSQRTQVKARTLHPVYDELFHFSVPAEACRRRGACVLFTVMDHDWLSTNDFAGEAALGLGGISGIARPHVGGGMRPGQPITLHLRRPRAQVRSALRMLEGRTSREAQEFVKKLKELEKCMEADL.

Residues 22 to 44 form a disordered region; that stretch reads RRKTEQEPEVTNSQEPPTGAWKP. The 160-residue stretch at 139–298 folds into the C2 1 domain; it reads SSEEHMEAIM…VKSARANGTA (160 aa). Ca(2+) contacts are provided by aspartate 174 and aspartate 180. The segment at 193-214 is disordered; it reads APQEPSGQKEQRFGFRKGSKRS. The Ca(2+) site is built by aspartate 258 and aspartate 260. In terms of domain architecture, MHD1 spans 626-747; that stretch reads FELYLTLADT…EASLFYTELL (122 aa). The MHD2 domain maps to 851–959; that stretch reads DEAVAPLLKY…CSTRECIEQF (109 aa). Positions 973 to 1099 constitute a C2 2 domain; the sequence is RFGRLTVRCH…GIARPHVGGG (127 aa). Residues leucine 1003, aspartate 1004, aspartate 1010, aspartate 1068, aspartate 1070, serine 1073, and aspartate 1076 each contribute to the Ca(2+) site.

It belongs to the unc-13 family. As to quaternary structure, interacts with ADGRB1, this interaction is direct. Interacts with endosomal SNARE proteins VAMP3, VAMP4, STX6 and STX16; this interaction is increased in the presence of calcium. The cofactor is Ca(2+). In terms of tissue distribution, prominently expressed in brain structures including hypothalamus, amygdala, stria terminalis and periaqueductal gray (at protein level). Expressed in nonneuronal tissues, including placenta, lung, pancreas, spleen, and testes. Within placenta, expression is restricted to the syncytiotrophoblasts.

It is found in the cytoplasm. Its subcellular location is the cytosol. It localises to the recycling endosome membrane. The protein resides in the late endosome membrane. The protein localises to the golgi apparatus. It is found in the trans-Golgi network membrane. Its subcellular location is the cell membrane. In terms of biological role, functions in endosome to Golgi retrograde transport. In response to calcium influx, may interact with SNARE fusion receptors and membrane phospholipids to mediate endosome fusion with the trans-Golgi network. By promoting the recycling of secretory vesicle transmembrane proteins, it indirectly controls dense-core secretory vesicle biogenesis, maturation and their ability to mediate the constitutive and regulated secretion of neurotransmitters and hormones. May regulate behavior and food intake by controlling calcium-stimulated exocytosis of neurotransmitters including NPY and serotonin and hormones like insulin. Proposed to play a role in hypothalamic neuronal firing by modulating gamma-aminobutyric acid (GABA)ergic inhibitory neurotransmission. The chain is BAI1-associated protein 3 from Mus musculus (Mouse).